The sequence spans 135 residues: Aspartate 1-decarboxylase (135 aa).

S25 acts as the Schiff-base intermediate with substrate; via pyruvic acid in catalysis. S25 carries the post-translational modification Pyruvic acid (Ser). Residue T57 coordinates substrate. Y58 acts as the Proton donor in catalysis. G73–A75 contributes to the substrate binding site.

Belongs to the PanD family. In terms of assembly, heterooctamer of four alpha and four beta subunits. Pyruvate is required as a cofactor. Post-translationally, is synthesized initially as an inactive proenzyme, which is activated by self-cleavage at a specific serine bond to produce a beta-subunit with a hydroxyl group at its C-terminus and an alpha-subunit with a pyruvoyl group at its N-terminus.

The protein resides in the cytoplasm. The catalysed reaction is L-aspartate + H(+) = beta-alanine + CO2. It participates in cofactor biosynthesis; (R)-pantothenate biosynthesis; beta-alanine from L-aspartate: step 1/1. Its function is as follows. Catalyzes the pyruvoyl-dependent decarboxylation of aspartate to produce beta-alanine. The sequence is that of Aspartate 1-decarboxylase from Albidiferax ferrireducens (strain ATCC BAA-621 / DSM 15236 / T118) (Rhodoferax ferrireducens).